We begin with the raw amino-acid sequence, 72 residues long: Toxin Acra II-2 (72 aa).

The LCN-type CS-alpha/beta domain maps to 3–67; that stretch reads VPGNYPLNTN…VWNAAKNYCK (65 aa). 3 disulfide bridges follow: Cys18/Cys41, Cys27/Cys46, and Cys31/Cys48.

This sequence belongs to the long (3 C-C) scorpion toxin superfamily. Sodium channel inhibitor family. Beta subfamily. As to expression, expressed by the venom gland.

The protein localises to the secreted. Functionally, binds to sodium channels (Nav) and affects the channel activation process. This Androctonus crassicauda (Arabian fat-tailed scorpion) protein is Toxin Acra II-2.